The chain runs to 179 residues: Centromere protein R (179 aa).

The tract at residues 1-79 is disordered; the sequence is MSAKRSLKLD…RLSRRGQPQT (79 aa). Residues 30–50 are compositionally biased toward polar residues; sequence NSYSPTTGTCQISPFSSPTSH. Over residues 51–64 the composition is skewed to basic and acidic residues; sequence NAEDLRNGLSHGDE. The short motif at 172–176 is the LXXLL motif element; the sequence is LQLLL.

Its subcellular location is the nucleus. The protein resides in the chromosome. The protein localises to the centromere. It localises to the kinetochore. Functionally, transcription coregulator that can have both coactivator and corepressor functions. Involved in the coactivation of nuclear receptors for retinoid X (RXRs) and thyroid hormone (TRs) in a ligand-dependent fashion. Probable component of a centromeric complex involved in assembly of kinetochore proteins, mitotic progression and chromosome segregation. The sequence is that of Centromere protein R (CENPR) from Gallus gallus (Chicken).